The primary structure comprises 74 residues: Putative protein YozX (74 aa).

This chain is Putative protein YozX (yozX), found in Bacillus subtilis (strain 168).